We begin with the raw amino-acid sequence, 476 residues long: Inosine-5'-monophosphate dehydrogenase (476 aa).

CBS domains follow at residues 92 to 150 and 151 to 207; these read MIEN…IADV and MTKD…PNAS. Residues D244 and 294–296 contribute to the NAD(+) site; that span reads GVG. Residues G296 and G298 each contribute to the K(+) site. S299 lines the IMP pocket. C301 is a K(+) binding site. Catalysis depends on C301, which acts as the Thioimidate intermediate. Residues 334 to 336, 357 to 358, 381 to 385, and E413 contribute to the IMP site; these read DGG, GS, and YRGMA. The K(+) site is built by E467 and S468.

This sequence belongs to the IMPDH/GMPR family. In terms of assembly, homotetramer. Requires K(+) as cofactor.

It carries out the reaction IMP + NAD(+) + H2O = XMP + NADH + H(+). The protein operates within purine metabolism; XMP biosynthesis via de novo pathway; XMP from IMP: step 1/1. Mycophenolic acid (MPA) is a non-competitive inhibitor that prevents formation of the closed enzyme conformation by binding to the same site as the amobile flap. In contrast, mizoribine monophosphate (MZP) is a competitive inhibitor that induces the closed conformation. MPA is a potent inhibitor of mammalian IMPDHs but a poor inhibitor of the bacterial enzymes. MZP is a more potent inhibitor of bacterial IMPDH. Its function is as follows. Catalyzes the conversion of inosine 5'-phosphate (IMP) to xanthosine 5'-phosphate (XMP), the first committed and rate-limiting step in the de novo synthesis of guanine nucleotides, and therefore plays an important role in the regulation of cell growth. This Nitrosopumilus maritimus (strain SCM1) protein is Inosine-5'-monophosphate dehydrogenase.